The primary structure comprises 533 residues: DEAD-box ATP-dependent RNA helicase CshA (533 aa).

A Q motif motif is present at residues 2–30; the sequence is TTFRELGLSDSLLQSVESMGFEEATPIQA. A Helicase ATP-binding domain is found at 33-203; it reads IPHALQGKDI…ERFMTEPQHI (171 aa). 46–53 contributes to the ATP binding site; that stretch reads AQTGTGKT. The DEAD box signature appears at 151 to 154; sequence DEAD. In terms of domain architecture, Helicase C-terminal spans 214–374; it reads NIQQFYLEVQ…RMDAPTLDEA (161 aa). The disordered stretch occupies residues 428–533; sequence TTPIALTSEP…ERKHHSRPQA (106 aa). Positions 458–512 are enriched in basic and acidic residues; that stretch reads DGNRNRSRDGRGGGDGRNRDRNRDGRNRDGNRDRNRDGNRDRNRDGGSRGRRGEG. Basic residues predominate over residues 524 to 533; that stretch reads ERKHHSRPQA.

This sequence belongs to the DEAD box helicase family. CshA subfamily. As to quaternary structure, oligomerizes, may be a member of the RNA degradosome.

The protein resides in the cytoplasm. The enzyme catalyses ATP + H2O = ADP + phosphate + H(+). In terms of biological role, DEAD-box RNA helicase possibly involved in RNA degradation. May work in conjunction with the cold shock proteins to ensure proper initiation of transcription at low and optimal temperatures. Unwinds dsRNA in both 5'- and 3'-directions and shows RNA-dependent ATPase activity. Probably has a somewhat redundant function with cshB, as cshA can partially complement the growth effects of a cshB deletion. Plays a role in adaptation to cold, oxididant and pH stress. This Bacillus cereus (strain ATCC 14579 / DSM 31 / CCUG 7414 / JCM 2152 / NBRC 15305 / NCIMB 9373 / NCTC 2599 / NRRL B-3711) protein is DEAD-box ATP-dependent RNA helicase CshA.